The chain runs to 481 residues: E3 ubiquitin-protein ligase makorin-1 (481 aa).

C3H1-type zinc fingers lie at residues 55-82, 84-111, and 208-235; these read WTKQVTCRYFMHGVCKEGDNCRYSHDLS, SPYGVVCKYFQRGYCVYGDRCRYEHSKP, and ETKKQLCPYAAVGECRYGENCVYLHGDS. Residues 236–263 are makorin-type Cys-His; sequence CDMCGLQVLHPVDAAQRSQHIKSCIEAH. The RING-type zinc-finger motif lies at 281–335; that stretch reads CGICMEVVYEKANPSERRFGILSNCNHTYCLKCIRKWRSAKQFESKIIKSCPECR. Residues 364-393 form a C3H1-type 4 zinc finger; sequence AMSNKACRYFDEGRGSCPFGGNCFYKHAYP.

As to quaternary structure, interacts with p53/TP53 and CDKN1A. Interacts with TERT, modulating telomere length homeostasis. Auto-ubiquitinated; which leads to proteasomal degradation. As to expression, highly expressed in embryo, in specific cell types of the central nervous system, in brain with the strongest levels of expression in the mantle layers and in testis. Moderate to low levels in somatic tissues.

It carries out the reaction S-ubiquitinyl-[E2 ubiquitin-conjugating enzyme]-L-cysteine + [acceptor protein]-L-lysine = [E2 ubiquitin-conjugating enzyme]-L-cysteine + N(6)-ubiquitinyl-[acceptor protein]-L-lysine.. Its pathway is protein modification; protein ubiquitination. Its function is as follows. E3 ubiquitin ligase catalyzing the covalent attachment of ubiquitin moieties onto substrate proteins. These substrates include FILIP1, p53/TP53, CDKN1A and TERT. Keeps cells alive by suppressing p53/TP53 under normal conditions, but stimulates apoptosis by repressing CDKN1A under stress conditions. Acts as a negative regulator of telomerase. Has negative and positive effects on RNA polymerase II-dependent transcription. This chain is E3 ubiquitin-protein ligase makorin-1 (Mkrn1), found in Mus musculus (Mouse).